The primary structure comprises 323 residues: D-alanine--D-alanine ligase (323 aa).

The 201-residue stretch at 105 to 305 folds into the ATP-grasp domain; it reads KQQLVPRGIP…YEDLVEAIVE (201 aa). 131–188 is a binding site for ATP; the sequence is PLARPYVLKPVNEGSSVGVAIVTDESNYGNPIRRDAPGPWQEFRELLAEPFIRGRELT. Mg(2+)-binding residues include D256, E272, and N274.

It belongs to the D-alanine--D-alanine ligase family. Mg(2+) is required as a cofactor. Mn(2+) serves as cofactor.

The protein resides in the cytoplasm. It catalyses the reaction 2 D-alanine + ATP = D-alanyl-D-alanine + ADP + phosphate + H(+). Its pathway is cell wall biogenesis; peptidoglycan biosynthesis. In terms of biological role, cell wall formation. The chain is D-alanine--D-alanine ligase from Erythrobacter litoralis (strain HTCC2594).